The following is a 504-amino-acid chain: Maturase K (504 aa).

Belongs to the intron maturase 2 family. MatK subfamily.

It localises to the plastid. The protein localises to the chloroplast. Functionally, usually encoded in the trnK tRNA gene intron. Probably assists in splicing its own and other chloroplast group II introns. This is Maturase K from Lepidium campestre (Field pepperwort).